A 355-amino-acid polypeptide reads, in one-letter code: Mu-like prophage FluMu I protein (355 aa).

It belongs to the peptidase U35 family.

In terms of biological role, potential protease involved in virion morphogenesis. The chain is Mu-like prophage FluMu I protein from Haemophilus influenzae (strain ATCC 51907 / DSM 11121 / KW20 / Rd).